Consider the following 117-residue polypeptide: uncharacterized protein (117 aa).

The span at 1-12 (MAQNSVSLSAGD) shows a compositional bias: polar residues. Disordered regions lie at residues 1-30 (MAQN…NPSA) and 43-87 (VTRL…SPYP).

This is an uncharacterized protein from Mus musculus (Mouse).